The sequence spans 494 residues: Probable cytosol aminopeptidase (494 aa).

2 residues coordinate Mn(2+): Lys260 and Asp265. Lys272 is an active-site residue. Asp283, Asp342, and Glu344 together coordinate Mn(2+). Residue Arg346 is part of the active site.

The protein belongs to the peptidase M17 family. Requires Mn(2+) as cofactor.

Its subcellular location is the cytoplasm. It catalyses the reaction Release of an N-terminal amino acid, Xaa-|-Yaa-, in which Xaa is preferably Leu, but may be other amino acids including Pro although not Arg or Lys, and Yaa may be Pro. Amino acid amides and methyl esters are also readily hydrolyzed, but rates on arylamides are exceedingly low.. The catalysed reaction is Release of an N-terminal amino acid, preferentially leucine, but not glutamic or aspartic acids.. Functionally, presumably involved in the processing and regular turnover of intracellular proteins. Catalyzes the removal of unsubstituted N-terminal amino acids from various peptides. The polypeptide is Probable cytosol aminopeptidase (Bacillus cereus (strain AH187)).